A 710-amino-acid polypeptide reads, in one-letter code: Choline transporter-like protein 2 (710 aa).

The Cytoplasmic segment spans residues 1 to 34 (MEDDGKSPPDSAYGEPKKYDPNFKGPIQNRGCTD). The chain crosses the membrane as a helical span at residues 35 to 55 (ILCCILIVLGIIAYVAVGIVA). The Extracellular segment spans residues 56-236 (WTYGDPRKVI…KIFEDYTVSW (181 aa)). N-linked (GlcNAc...) asparagine glycosylation is found at N147, N190, and N204. The helical transmembrane segment at 237-257 (YWIIIGLIIAMVISLIFVVLL) threads the bilayer. The Cytoplasmic portion of the chain corresponds to 258–260 (RFL). The chain crosses the membrane as a helical span at residues 261–281 (AGIMVWVMIVLVIAVMGYGIF). Topologically, residues 282 to 319 (HCYMEYARLKGQSGSDVTLKDIGFQTDIRVYLHLRQTW) are extracellular. Residues 320 to 340 (LAFMIILCILEVIVILLLIFL) traverse the membrane as a helical segment. Residues 341-368 (RKRIMIAIALIKEASRAVGFVMSSLVFP) lie on the Cytoplasmic side of the membrane. The helical transmembrane segment at 369-389 (LFTFLLVCLCIAYWAITAVFL) threads the bilayer. Residues 390-458 (STSNEAVYKV…FQIYNAFMFL (69 aa)) are Extracellular-facing. N-linked (GlcNAc...) asparagine glycans are attached at residues N401, N418, and N421. Residues 459-481 (WLANFVIALGQVTLAGAFASYYW) traverse the membrane as a helical segment. Over 482-508 (AFKKPDDMPAFPIFSSLGRALRYHTGS) the chain is Cytoplasmic. The chain crosses the membrane as a helical span at residues 509–529 (LAFGSLILAIVQMIRILLEYL). Over 530 to 567 (DHKLKGADNKCARFLLCCLKCCFWCLEKFIKFLNRNAY) the chain is Extracellular. Residues 568–588 (IMIAIYGTNFCTSARNAFFLL) traverse the membrane as a helical segment. The Cytoplasmic portion of the chain corresponds to 589 to 603 (MRNIIRVAVLDKVTD). The helical transmembrane segment at 604 to 624 (FLLFLGKLLVVGCVGILAFFF) threads the bilayer. Over 625 to 642 (FSRRIQIVQDTAPTLNYY) the chain is Extracellular. A helical transmembrane segment spans residues 643 to 663 (WVPILTVILGSYLIAHGFFSV). At 664–710 (YGMCVDTLFLCFLEDLERNDGSTERPYFMSGSLQKLLNKSNQTKPDK) the chain is on the cytoplasmic side.

This sequence belongs to the CTL (choline transporter-like) family.

The protein resides in the cell membrane. It localises to the mitochondrion outer membrane. The enzyme catalyses choline(out) + n H(+)(in) = choline(in) + n H(+)(out). It carries out the reaction ethanolamine(out) + n H(+)(in) = ethanolamine(in) + n H(+)(out). Choline/H+ antiporter, mainly in mitochodria. Also acts as a low-affinity ethanolamine/H+ antiporter, regulating the supply of extracellular ethanolamine (Etn) for the CDP-Etn pathway, redistribute intracellular Etn and balance the CDP-Cho and CDP-Etn arms of the Kennedy pathway. The chain is Choline transporter-like protein 2 (slc44a2) from Xenopus laevis (African clawed frog).